A 304-amino-acid polypeptide reads, in one-letter code: Quinolinate synthase (304 aa).

Residues His-24 and Ser-41 each coordinate iminosuccinate. Residue Cys-86 participates in [4Fe-4S] cluster binding. Residues 112–114 (YVN) and Ser-129 each bind iminosuccinate. Cys-171 serves as a coordination point for [4Fe-4S] cluster. Residues 197-199 (HPE) and Thr-214 contribute to the iminosuccinate site. Cys-259 is a binding site for [4Fe-4S] cluster.

This sequence belongs to the quinolinate synthase family. Type 2 subfamily. [4Fe-4S] cluster is required as a cofactor.

It is found in the cytoplasm. It catalyses the reaction iminosuccinate + dihydroxyacetone phosphate = quinolinate + phosphate + 2 H2O + H(+). It functions in the pathway cofactor biosynthesis; NAD(+) biosynthesis; quinolinate from iminoaspartate: step 1/1. Functionally, catalyzes the condensation of iminoaspartate with dihydroxyacetone phosphate to form quinolinate. This chain is Quinolinate synthase, found in Geobacter sp. (strain M21).